The chain runs to 269 residues: Triosephosphate isomerase (269 aa).

8–10 (NWK) serves as a coordination point for substrate. The active-site Electrophile is histidine 105. Catalysis depends on glutamate 183, which acts as the Proton acceptor. Residues glycine 189, serine 227, and 248 to 249 (GG) contribute to the substrate site.

The protein belongs to the triosephosphate isomerase family. Homodimer.

It is found in the cytoplasm. It carries out the reaction D-glyceraldehyde 3-phosphate = dihydroxyacetone phosphate. It participates in carbohydrate biosynthesis; gluconeogenesis. It functions in the pathway carbohydrate degradation; glycolysis; D-glyceraldehyde 3-phosphate from glycerone phosphate: step 1/1. In terms of biological role, involved in the gluconeogenesis. Catalyzes stereospecifically the conversion of dihydroxyacetone phosphate (DHAP) to D-glyceraldehyde-3-phosphate (G3P). The chain is Triosephosphate isomerase from Psychrobacter arcticus (strain DSM 17307 / VKM B-2377 / 273-4).